The chain runs to 372 residues: 3-ketodihydrosphingosine reductase TSC10 (372 aa).

Val64 contacts NADP(+). Residues Gly67, Ser69, Gly71, Arg92, Lys96, Asp123, and Leu124 each coordinate NADPH. Residues 67–71 carry the GXSXG motif; that stretch reads GGSQG. An NADP(+)-binding site is contributed by Asp123. The active-site Proton donor is Ser205. Tyr219, Lys223, and Ser254 together coordinate NADP(+). Tyr219 functions as the Proton acceptor in the catalytic mechanism. Lys223 functions as the Lowers pKa of active site Tyr in the catalytic mechanism. A helical transmembrane segment spans residues 321–341; that stretch reads LLQIPLAIFMCIFSPVWNAFV.

It belongs to the short-chain dehydrogenases/reductases (SDR) family.

It localises to the endoplasmic reticulum membrane. The enzyme catalyses sphinganine + NADP(+) = 3-oxosphinganine + NADPH + H(+). The protein operates within lipid metabolism; sphingolipid metabolism. Its function is as follows. Catalyzes the reduction of 3'-oxosphinganine (3-ketodihydrosphingosine/KDS) to sphinganine (dihydrosphingosine/DHS), the second step of de novo sphingolipid biosynthesis. The protein is 3-ketodihydrosphingosine reductase TSC10 (TSC10) of Yarrowia lipolytica (strain CLIB 122 / E 150) (Yeast).